Consider the following 330-residue polypeptide: Glycerol-3-phosphate dehydrogenase [NAD(P)+] (330 aa).

Positions 14, 15, 35, and 109 each coordinate NADPH. The sn-glycerol 3-phosphate site is built by Lys-109 and Gly-137. NADPH is bound at residue Ala-141. Residues Lys-192, Asp-248, Ser-258, Arg-259, and Asn-260 each contribute to the sn-glycerol 3-phosphate site. Lys-192 serves as the catalytic Proton acceptor. Residue Arg-259 participates in NADPH binding. NADPH contacts are provided by Leu-283 and Glu-285.

This sequence belongs to the NAD-dependent glycerol-3-phosphate dehydrogenase family.

It localises to the cytoplasm. The catalysed reaction is sn-glycerol 3-phosphate + NAD(+) = dihydroxyacetone phosphate + NADH + H(+). It catalyses the reaction sn-glycerol 3-phosphate + NADP(+) = dihydroxyacetone phosphate + NADPH + H(+). Its pathway is membrane lipid metabolism; glycerophospholipid metabolism. Its function is as follows. Catalyzes the reduction of the glycolytic intermediate dihydroxyacetone phosphate (DHAP) to sn-glycerol 3-phosphate (G3P), the key precursor for phospholipid synthesis. The chain is Glycerol-3-phosphate dehydrogenase [NAD(P)+] from Rickettsia massiliae (strain Mtu5).